We begin with the raw amino-acid sequence, 245 residues long: Acetylglutamate kinase (245 aa).

Residues 41-42 (GG), Arg-63, and Asn-156 contribute to the substrate site.

The protein belongs to the acetylglutamate kinase family. ArgB subfamily.

The protein localises to the cytoplasm. It carries out the reaction N-acetyl-L-glutamate + ATP = N-acetyl-L-glutamyl 5-phosphate + ADP. Its pathway is amino-acid biosynthesis; L-arginine biosynthesis; N(2)-acetyl-L-ornithine from L-glutamate: step 2/4. In terms of biological role, catalyzes the ATP-dependent phosphorylation of N-acetyl-L-glutamate. The sequence is that of Acetylglutamate kinase from Leuconostoc citreum (strain KM20).